A 663-amino-acid polypeptide reads, in one-letter code: Methionine--tRNA ligase (663 aa).

Positions 10-20 match the 'HIGH' region motif; it reads AYTNGPLHLGH. 4 residues coordinate Zn(2+): Cys142, Cys145, Cys154, and Cys157. The 'KMSKS' region signature appears at 323–327; it reads KMSTS. An ATP-binding site is contributed by Thr326. Residues 563-663 form the tRNA-binding domain; it reads YFGNIDLRVG…RDLPVGSKIH (101 aa).

The protein belongs to the class-I aminoacyl-tRNA synthetase family. MetG type 1 subfamily. In terms of assembly, homodimer. Zn(2+) is required as a cofactor.

It localises to the cytoplasm. The catalysed reaction is tRNA(Met) + L-methionine + ATP = L-methionyl-tRNA(Met) + AMP + diphosphate. Its function is as follows. Is required not only for elongation of protein synthesis but also for the initiation of all mRNA translation through initiator tRNA(fMet) aminoacylation. The polypeptide is Methionine--tRNA ligase (Methanococcus maripaludis (strain C5 / ATCC BAA-1333)).